The sequence spans 276 residues: 3-methyl-2-oxobutanoate hydroxymethyltransferase (276 aa).

Residues Asp44 and Asp83 each coordinate Mg(2+). Residues 44–45 (DS), Asp83, and Lys112 each bind 3-methyl-2-oxobutanoate. Glu114 provides a ligand contact to Mg(2+). Glu180 functions as the Proton acceptor in the catalytic mechanism. Residues 256–276 (PTEAQSSRMKPDELSRALNAE) form a disordered region.

It belongs to the PanB family. In terms of assembly, homodecamer; pentamer of dimers. The cofactor is Mg(2+).

Its subcellular location is the cytoplasm. It carries out the reaction 3-methyl-2-oxobutanoate + (6R)-5,10-methylene-5,6,7,8-tetrahydrofolate + H2O = 2-dehydropantoate + (6S)-5,6,7,8-tetrahydrofolate. Its pathway is cofactor biosynthesis; (R)-pantothenate biosynthesis; (R)-pantoate from 3-methyl-2-oxobutanoate: step 1/2. Its function is as follows. Catalyzes the reversible reaction in which hydroxymethyl group from 5,10-methylenetetrahydrofolate is transferred onto alpha-ketoisovalerate to form ketopantoate. The chain is 3-methyl-2-oxobutanoate hydroxymethyltransferase from Gluconacetobacter diazotrophicus (strain ATCC 49037 / DSM 5601 / CCUG 37298 / CIP 103539 / LMG 7603 / PAl5).